The chain runs to 258 residues: Putative L-lactate dehydrogenase operon regulatory protein (258 aa).

The 69-residue stretch at 6 to 74 folds into the HTH gntR-type domain; it reads RRLSDEVADR…RGGGTFIRWR (69 aa). A DNA-binding region (H-T-H motif) is located at residues 34 to 53; it reads ERQLAMQLGVSRNSLREALA.

In terms of biological role, may be a regulatory protein for the LCT genes. This is Putative L-lactate dehydrogenase operon regulatory protein (lldR) from Escherichia coli (strain K12).